A 218-amino-acid chain; its full sequence is LOB domain-containing protein 29 (218 aa).

The 103-residue stretch at 10–112 folds into the LOB domain; it reads SPCGACKFLR…AELEILKQQA (103 aa).

It belongs to the LOB domain-containing protein family. As to expression, expressed in roots.

In terms of biological role, involved in lateral root formation. Regulated by the transcriptional activators ARF7 and ARF19. The polypeptide is LOB domain-containing protein 29 (LBD29) (Arabidopsis thaliana (Mouse-ear cress)).